A 359-amino-acid chain; its full sequence is Peptide chain release factor 1 (359 aa).

The residue at position 235 (glutamine 235) is an N5-methylglutamine.

It belongs to the prokaryotic/mitochondrial release factor family. In terms of processing, methylated by PrmC. Methylation increases the termination efficiency of RF1.

It is found in the cytoplasm. Peptide chain release factor 1 directs the termination of translation in response to the peptide chain termination codons UAG and UAA. This is Peptide chain release factor 1 from Verminephrobacter eiseniae (strain EF01-2).